The primary structure comprises 416 residues: Xyloglucan O-acetyltransferase 1 (416 aa).

Residues 1–14 (MGLNEQQNVPSQRK) lie on the Cytoplasmic side of the membrane. Residues 15 to 35 (IIVFIVLAFIPIALFRLCFNN) traverse the membrane as a helical; Signal-anchor for type II membrane protein segment. At 36–416 (PFSSIKDTSL…MIEMLRRWKV (381 aa)) the chain is on the lumenal side. Disulfide bonds link Cys79–Cys129, Cys100–Cys165, Cys109–Cys395, and Cys318–Cys391. N-linked (GlcNAc...) asparagine glycosylation is present at Asn96. Positions 152-154 (GDS) match the GDS motif motif. Ser154 acts as the Nucleophile in catalysis. N-linked (GlcNAc...) asparagine glycans are attached at residues Asn194, Asn269, and Asn319. Asp390 serves as the catalytic Proton donor. Positions 390 to 393 (DCLH) match the DXXH motif motif. The active-site Proton acceptor is the His393.

Belongs to the PC-esterase family. TBL subfamily.

The protein localises to the golgi apparatus membrane. Its function is as follows. Xyloglucan acetyltransferase that catalyzes the acetylation of fucosylated Gal residues on xyloglucan side chains. Predominantly catalyze 6-O-monoacetylation of Gal residues in the Fuc-Gal-Xyl trisaccharide side chains of xyloglucan oligomers. Involved in xyloglucan specific O-acetylation in roots and rosette leaves. The protein is Xyloglucan O-acetyltransferase 1 of Arabidopsis thaliana (Mouse-ear cress).